The sequence spans 360 residues: Photosystem II protein D1 1 (360 aa).

Helical transmembrane passes span Tyr-29 to Thr-46, His-118 to Leu-133, and Trp-142 to Ala-156. His-118 serves as a coordination point for chlorophyll a. Tyr-126 lines the pheophytin a pocket. Asp-170 and Glu-189 together coordinate [CaMn4O5] cluster. Residues Phe-197–Leu-218 traverse the membrane as a helical segment. A chlorophyll a-binding site is contributed by His-198. A quinone-binding positions include His-215 and Ser-264–Phe-265. Residue His-215 participates in Fe cation binding. Position 272 (His-272) interacts with Fe cation. A helical transmembrane segment spans residues Phe-274 to Leu-288. [CaMn4O5] cluster contacts are provided by His-332, Glu-333, Asp-342, and Ala-344. A propeptide spanning residues Ala-345–Gly-360 is cleaved from the precursor.

It belongs to the reaction center PufL/M/PsbA/D family. PSII is composed of 1 copy each of membrane proteins PsbA, PsbB, PsbC, PsbD, PsbE, PsbF, PsbH, PsbI, PsbJ, PsbK, PsbL, PsbM, PsbT, PsbX, PsbY, PsbZ, Psb30/Ycf12, peripheral proteins PsbO, CyanoQ (PsbQ), PsbU, PsbV and a large number of cofactors. It forms dimeric complexes. The D1/D2 heterodimer binds P680, chlorophylls that are the primary electron donor of PSII, and subsequent electron acceptors. It shares a non-heme iron and each subunit binds pheophytin, quinone, additional chlorophylls, carotenoids and lipids. D1 provides most of the ligands for the Mn4-Ca-O5 cluster of the oxygen-evolving complex (OEC). There is also a Cl(-1) ion associated with D1 and D2, which is required for oxygen evolution. The PSII complex binds additional chlorophylls, carotenoids and specific lipids. serves as cofactor. Tyr-161 forms a radical intermediate that is referred to as redox-active TyrZ, YZ or Y-Z. Post-translationally, C-terminally processed by CtpA; processing is essential to allow assembly of the oxygen-evolving complex and thus photosynthetic growth.

Its subcellular location is the cellular thylakoid membrane. It catalyses the reaction 2 a plastoquinone + 4 hnu + 2 H2O = 2 a plastoquinol + O2. Photosystem II (PSII) is a light-driven water:plastoquinone oxidoreductase that uses light energy to abstract electrons from H(2)O, generating O(2) and a proton gradient subsequently used for ATP formation. It consists of a core antenna complex that captures photons, and an electron transfer chain that converts photonic excitation into a charge separation. The D1/D2 (PsbA/PsbD) reaction center heterodimer binds P680, the primary electron donor of PSII as well as several subsequent electron acceptors. This chain is Photosystem II protein D1 1, found in Picosynechococcus sp. (strain ATCC 27264 / PCC 7002 / PR-6) (Agmenellum quadruplicatum).